The following is a 378-amino-acid chain: Lactosylceramide 1,3-N-acetyl-beta-D-glucosaminyltransferase (378 aa).

The Cytoplasmic segment spans residues 1–14; it reads MRMLVSGRRVKKWQ. The chain crosses the membrane as a helical; Signal-anchor for type II membrane protein span at residues 15–35; the sequence is LIIQLFATCFLASLMFFWEPI. Residues 36–378 lie on the Lumenal side of the membrane; it reads DNHIVSHMKS…DTYPCRAAFI (343 aa). Residue Asn-59 is glycosylated (N-linked (GlcNAc...) asparagine).

This sequence belongs to the glycosyltransferase 31 family. In terms of tissue distribution, widely expressed. Highly expressed in lung, colon, placenta, testis, pituitary gland and cerebellum. Weakly expressed in brain, liver, spleen, lymph node and thymus.

Its subcellular location is the golgi apparatus membrane. It carries out the reaction a beta-D-Gal-(1-&gt;4)-beta-D-Glc-(1&lt;-&gt;1)-Cer(d18:1(4E)) + UDP-N-acetyl-alpha-D-glucosamine = a beta-D-GlcNAc-(1-&gt;3)-beta-D-Gal-(1-&gt;4)-beta-D-Glc-(1&lt;-&gt;1)-Cer(d18:1(4E)) + UDP + H(+). It catalyses the reaction a neolactoside nLc4Cer(d18:1(4E)) + UDP-N-acetyl-alpha-D-glucosamine = a neolactoside IV(3)-beta-GlcNAc-nLc4Cer(d18:1(4E)) + UDP + H(+). It functions in the pathway protein modification; protein glycosylation. Beta-1,3-N-acetylglucosaminyltransferase that plays a key role in the synthesis of lacto- or neolacto-series carbohydrate chains on glycolipids, notably by participating in biosynthesis of HNK-1 and Lewis X carbohydrate structures. Has strong activity toward lactosylceramide (LacCer) and neolactotetraosylceramide (nLc(4)Cer; paragloboside), resulting in the synthesis of Lc(3)Cer and neolactopentaosylceramide (nLc(5)Cer), respectively. Probably plays a central role in regulating neolacto-series glycolipid synthesis during embryonic development. In Homo sapiens (Human), this protein is Lactosylceramide 1,3-N-acetyl-beta-D-glucosaminyltransferase.